Consider the following 485-residue polypeptide: Glutamyl-tRNA(Gln) amidotransferase subunit A (485 aa).

Active-site charge relay system residues include lysine 82 and serine 157. Catalysis depends on serine 181, which acts as the Acyl-ester intermediate.

Belongs to the amidase family. GatA subfamily. As to quaternary structure, heterotrimer of A, B and C subunits.

It carries out the reaction L-glutamyl-tRNA(Gln) + L-glutamine + ATP + H2O = L-glutaminyl-tRNA(Gln) + L-glutamate + ADP + phosphate + H(+). Allows the formation of correctly charged Gln-tRNA(Gln) through the transamidation of misacylated Glu-tRNA(Gln) in organisms which lack glutaminyl-tRNA synthetase. The reaction takes place in the presence of glutamine and ATP through an activated gamma-phospho-Glu-tRNA(Gln). The chain is Glutamyl-tRNA(Gln) amidotransferase subunit A from Treponema denticola (strain ATCC 35405 / DSM 14222 / CIP 103919 / JCM 8153 / KCTC 15104).